We begin with the raw amino-acid sequence, 167 residues long: NADH-ubiquinone oxidoreductase chain 6 (167 aa).

4 consecutive transmembrane segments (helical) span residues serine 21–leucine 41, isoleucine 45–isoleucine 65, proline 78–isoleucine 98, and serine 132–valine 152.

It belongs to the complex I subunit 6 family.

The protein resides in the mitochondrion membrane. It carries out the reaction a ubiquinone + NADH + 5 H(+)(in) = a ubiquinol + NAD(+) + 4 H(+)(out). Core subunit of the mitochondrial membrane respiratory chain NADH dehydrogenase (Complex I) that is believed to belong to the minimal assembly required for catalysis. Complex I functions in the transfer of electrons from NADH to the respiratory chain. The immediate electron acceptor for the enzyme is believed to be ubiquinone. The polypeptide is NADH-ubiquinone oxidoreductase chain 6 (ND6) (Branchiostoma floridae (Florida lancelet)).